Consider the following 102-residue polypeptide: Protein Tat (102 aa).

The interaction with human CREBBP stretch occupies residues 1–24 (MEPVDPRLEPWKHPGSQPKTACNN). A transactivation region spans residues 1–48 (MEPVDPRLEPWKHPGSQPKTACNNCYCKKCCYHCQVCFLTKGLGISYG). Cys-22, Cys-25, and Cys-27 together coordinate Zn(2+). The tract at residues 22–37 (CNNCYCKKCCYHCQVC) is cysteine-rich. Lys-28 carries the N6-acetyllysine; by host PCAF modification. Zn(2+) contacts are provided by Cys-30, His-33, Cys-34, and Cys-37. Residues 38 to 48 (FLTKGLGISYG) are core. The tract at residues 48-102 (GRKKRRQRRGPPQGSQTHQVSLSKQPTSQPRGDPTGPKESKEKVERETETDPAVQ) is disordered. The Nuclear localization signal, RNA-binding (TAR), and protein transduction motif lies at 49-57 (RKKRRQRRG). Residues 49 to 86 (RKKRRQRRGPPQGSQTHQVSLSKQPTSQPRGDPTGPKE) are interaction with the host capping enzyme RNGTT. N6-acetyllysine; by host EP300 and GCN5L2 occurs at positions 50 and 51. Asymmetric dimethylarginine; by host PRMT6 occurs at positions 52 and 53. Over residues 62-77 (SQTHQVSLSKQPTSQP) the composition is skewed to polar residues. Residue Lys-71 forms a Glycyl lysine isopeptide (Lys-Gly) (interchain with G-Cter in ubiquitin) linkage. A Cell attachment site motif is present at residues 78 to 80 (RGD). The segment covering 83–96 (GPKESKEKVERETE) has biased composition (basic and acidic residues).

This sequence belongs to the lentiviruses Tat family. In terms of assembly, interacts with host CCNT1. Associates with the P-TEFb complex composed at least of Tat, P-TEFb (CDK9 and CCNT1), TAR RNA, RNA Pol II. Recruits the HATs CREBBP, TAF1/TFIID, EP300, PCAF and GCN5L2. Interacts with host KAT5/Tip60; this interaction targets the latter to degradation. Interacts with the host deacetylase SIRT1. Interacts with host capping enzyme RNGTT; this interaction stimulates RNGTT. Binds to host KDR, and to the host integrins ITGAV/ITGB3 and ITGA5/ITGB1. Interacts with host KPNB1/importin beta-1 without previous binding to KPNA1/importin alpha-1. Interacts with EIF2AK2. Interacts with host nucleosome assembly protein NAP1L1; this interaction may be required for the transport of Tat within the nucleus, since the two proteins interact at the nuclear rim. Interacts with host C1QBP/SF2P32; this interaction involves lysine-acetylated Tat. Interacts with the host chemokine receptors CCR2, CCR3 and CXCR4. Interacts with host DPP4/CD26; this interaction may trigger an anti-proliferative effect. Interacts with host LDLR. Interacts with the host extracellular matrix metalloproteinase MMP1. Interacts with host PRMT6; this interaction mediates Tat's methylation. Interacts with, and is ubiquitinated by MDM2/Hdm2. Interacts with host PSMC3 and HTATIP2. Interacts with STAB1; this interaction may overcome SATB1-mediated repression of IL2 and IL2RA (interleukin) in T cells by binding to the same domain than HDAC1. Interacts (when acetylated) with human CDK13, thereby increasing HIV-1 mRNA splicing and promoting the production of the doubly spliced HIV-1 protein Nef. Interacts with host TBP; this interaction modulates the activity of transcriptional pre-initiation complex. Interacts with host RELA. Interacts with host PLSCR1; this interaction negatively regulates Tat transactivation activity by altering its subcellular distribution. Asymmetrical arginine methylation by host PRMT6 seems to diminish the transactivation capacity of Tat and affects the interaction with host CCNT1. Post-translationally, acetylation by EP300, CREBBP, GCN5L2/GCN5 and PCAF regulates the transactivation activity of Tat. EP300-mediated acetylation of Lys-50 promotes dissociation of Tat from the TAR RNA through the competitive binding to PCAF's bromodomain. In addition, the non-acetylated Tat's N-terminus can also interact with PCAF. PCAF-mediated acetylation of Lys-28 enhances Tat's binding to CCNT1. Lys-50 is deacetylated by SIRT1. In terms of processing, polyubiquitination by host MDM2 does not target Tat to degradation, but activates its transactivation function and fosters interaction with CCNT1 and TAR RNA. Phosphorylated by EIF2AK2 on serine and threonine residues adjacent to the basic region important for TAR RNA binding and function. Phosphorylation of Tat by EIF2AK2 is dependent on the prior activation of EIF2AK2 by dsRNA.

Its subcellular location is the host nucleus. It is found in the host nucleolus. The protein localises to the host cytoplasm. The protein resides in the secreted. Transcriptional activator that increases RNA Pol II processivity, thereby increasing the level of full-length viral transcripts. Recognizes a hairpin structure at the 5'-LTR of the nascent viral mRNAs referred to as the transactivation responsive RNA element (TAR) and recruits the cyclin T1-CDK9 complex (P-TEFb complex) that will in turn hyperphosphorylate the RNA polymerase II to allow efficient elongation. The CDK9 component of P-TEFb and other Tat-activated kinases hyperphosphorylate the C-terminus of RNA Pol II that becomes stabilized and much more processive. Other factors such as HTATSF1/Tat-SF1, SUPT5H/SPT5, and HTATIP2 are also important for Tat's function. Besides its effect on RNA Pol II processivity, Tat induces chromatin remodeling of proviral genes by recruiting the histone acetyltransferases (HATs) CREBBP, EP300 and PCAF to the chromatin. This also contributes to the increase in proviral transcription rate, especially when the provirus integrates in transcriptionally silent region of the host genome. To ensure maximal activation of the LTR, Tat mediates nuclear translocation of NF-kappa-B by interacting with host RELA. Through its interaction with host TBP, Tat may also modulate transcription initiation. Tat can reactivate a latently infected cell by penetrating in it and transactivating its LTR promoter. In the cytoplasm, Tat is thought to act as a translational activator of HIV-1 mRNAs. Its function is as follows. Extracellular circulating Tat can be endocytosed by surrounding uninfected cells via the binding to several surface receptors such as CD26, CXCR4, heparan sulfate proteoglycans (HSPG) or LDLR. Neurons are rarely infected, but they internalize Tat via their LDLR. Through its interaction with nuclear HATs, Tat is potentially able to control the acetylation-dependent cellular gene expression. Modulates the expression of many cellular genes involved in cell survival, proliferation or in coding for cytokines or cytokine receptors. Tat plays a role in T-cell and neurons apoptosis. Tat induced neurotoxicity and apoptosis probably contribute to neuroAIDS. Circulating Tat also acts as a chemokine-like and/or growth factor-like molecule that binds to specific receptors on the surface of the cells, affecting many cellular pathways. In the vascular system, Tat binds to ITGAV/ITGB3 and ITGA5/ITGB1 integrins dimers at the surface of endothelial cells and competes with bFGF for heparin-binding sites, leading to an excess of soluble bFGF. The protein is Protein Tat of Human immunodeficiency virus type 1 group M subtype B (isolate RF/HAT3) (HIV-1).